A 356-amino-acid chain; its full sequence is Cyclin-D4-1 (356 aa).

This sequence belongs to the cyclin family. Cyclin D subfamily.

This Oryza sativa subsp. japonica (Rice) protein is Cyclin-D4-1 (CYCD4-1).